A 331-amino-acid chain; its full sequence is Flagellar P-ring protein (331 aa).

The first 25 residues, 1 to 25, serve as a signal peptide directing secretion; sequence MKKRLAVLLVIVLTITFSFSVTTRI.

The protein belongs to the FlgI family. The basal body constitutes a major portion of the flagellar organelle and consists of four rings (L,P,S, and M) mounted on a central rod.

It localises to the periplasm. It is found in the bacterial flagellum basal body. Functionally, assembles around the rod to form the L-ring and probably protects the motor/basal body from shearing forces during rotation. The chain is Flagellar P-ring protein from Thermotoga petrophila (strain ATCC BAA-488 / DSM 13995 / JCM 10881 / RKU-1).